Consider the following 422-residue polypeptide: Retinoic acid receptor RXR-beta-B (422 aa).

The segment at 1–89 (MNSLPPSTSA…SGPMLSQKRM (89 aa)) is modulating. NR C4-type zinc fingers lie at residues 90-110 (CAIC…CEGC) and 126-150 (CRDN…YQKC). The nuclear receptor DNA-binding region spans 90-155 (CAICGDRSSG…RYQKCLAMGM (66 aa)). The hinge stretch occupies residues 156-178 (KREAVQEERQKNKERDGDYECSS). Basic and acidic residues predominate over residues 161 to 173 (QEERQKNKERDGD). Residues 161-182 (QEERQKNKERDGDYECSSSANE) are disordered. Residues 181–421 (NEEMPVEKIL…TFLMEMLESP (241 aa)) enclose the NR LBD domain.

Belongs to the nuclear hormone receptor family. NR2 subfamily. In terms of assembly, homodimer. Heterodimer; with a rar molecule. Binds DNA preferentially as a rar/rxr heterodimer. Heterodimerizes with rarga. Shows uniform expression from the blastula to mid-gastrula stages. At 12 hours post-fertilization (hpf), expressed ubiquitously but more weakly. At 24 hpf, restricted to the ventral diencephalon, pharangeal endoderm and trunk and tail mesoderm; mesoderm expression is in medial cells of each somite along the dorsoventral axis, forming stripes. At 48 hpf, expressed in forebrain, eye, midbrain and anterior hindbrain.

It localises to the nucleus. Functionally, receptor for retinoic acid. Retinoic acid receptors bind as heterodimers to their target response elements in response to their ligands, all-trans or 9-cis retinoic acid, and regulate gene expression in various biological processes. The rar/rxr heterodimers bind to the retinoic acid response elements (RARE) composed of tandem 5'-AGGTCA-3' sites known as DR1-DR5. The high affinity ligand for rxrs is 9-cis retinoic acid. This chain is Retinoic acid receptor RXR-beta-B (rxrbb), found in Danio rerio (Zebrafish).